The sequence spans 220 residues: Ribose-5-phosphate isomerase A (220 aa).

Residues 28–31 (TGST), 81–84 (DGAD), and 94–97 (KGGG) each bind substrate. The Proton acceptor role is filled by E103. Residue K121 participates in substrate binding.

The protein belongs to the ribose 5-phosphate isomerase family. As to quaternary structure, homodimer.

The catalysed reaction is aldehydo-D-ribose 5-phosphate = D-ribulose 5-phosphate. The protein operates within carbohydrate degradation; pentose phosphate pathway; D-ribose 5-phosphate from D-ribulose 5-phosphate (non-oxidative stage): step 1/1. Catalyzes the reversible conversion of ribose-5-phosphate to ribulose 5-phosphate. The chain is Ribose-5-phosphate isomerase A from Vesicomyosocius okutanii subsp. Calyptogena okutanii (strain HA).